A 489-amino-acid chain; its full sequence is Rhamnulokinase (489 aa).

13 to 17 (ASSGR) provides a ligand contact to ATP. An intrachain disulfide couples Cys68 to Cys222. Residues Gly83 and 236-238 (HDT) each bind substrate. The active-site Proton acceptor is Asp237. Residue Thr259 coordinates ATP. Substrate is bound at residue Asn296. Residue Gln304 participates in ATP binding. Residues Cys353 and Cys370 are joined by a disulfide bond. Residue Gly402 coordinates ATP. A disulfide bridge connects residues Cys413 and Cys417.

It belongs to the rhamnulokinase family. Mg(2+) serves as cofactor.

The catalysed reaction is L-rhamnulose + ATP = L-rhamnulose 1-phosphate + ADP + H(+). It participates in carbohydrate degradation; L-rhamnose degradation; glycerone phosphate from L-rhamnose: step 2/3. Functionally, involved in the catabolism of L-rhamnose (6-deoxy-L-mannose). Catalyzes the transfer of the gamma-phosphate group from ATP to the 1-hydroxyl group of L-rhamnulose to yield L-rhamnulose 1-phosphate. This Salmonella dublin (strain CT_02021853) protein is Rhamnulokinase.